A 289-amino-acid polypeptide reads, in one-letter code: Inorganic pyrophosphatase (289 aa).

Serine 2 bears the N-acetylserine mark. N6-acetyllysine is present on lysine 57. 3 residues coordinate Mg(2+): aspartate 116, aspartate 121, and aspartate 153. Lysine 228 carries the N6-acetyllysine modification. Residue serine 250 is modified to Phosphoserine.

This sequence belongs to the PPase family. Homodimer. It depends on Mg(2+) as a cofactor.

Its subcellular location is the cytoplasm. It catalyses the reaction diphosphate + H2O = 2 phosphate + H(+). This is Inorganic pyrophosphatase (PPA1) from Pongo abelii (Sumatran orangutan).